Reading from the N-terminus, the 265-residue chain is Molybdenum-pterin-binding protein MopA (265 aa).

Mop domains are found at residues 126-192 (RTSN…MLAA) and 198-264 (RISA…ILAM).

It belongs to the ModE family.

The sequence is that of Molybdenum-pterin-binding protein MopA (mopA) from Rhodobacter capsulatus (Rhodopseudomonas capsulata).